The primary structure comprises 1492 residues: DNA polymerase alpha catalytic subunit (1492 aa).

3 disordered regions span residues 34 to 112 (DFIV…VEQS), 162 to 195 (SVTLESREEQERRRQSEQLKQQANIGQNQSDVNP), and 210 to 234 (ANSYQSKQNSHSVSKSKPGDHEMAN). A compositionally biased stretch (basic and acidic residues) spans 42–55 (YGYRDHGGEIWDRD). The segment covering 93–105 (NAASTNPSAQQKP) has biased composition (polar residues). Residues 166–178 (ESREEQERRRQSE) are compositionally biased toward basic and acidic residues. Polar residues-rich tracts occupy residues 184-194 (ANIGQNQSDVN) and 210-224 (ANSYQSKQNSHSVSK). 8 residues coordinate Zn(2+): Cys1314, Cys1317, Cys1341, Cys1344, Cys1375, Cys1380, Cys1393, and Cys1398. The CysA-type zinc finger occupies 1314-1344 (CPHCAHNYHFPGILVPSSNNTELTGLACVKC). The short motif at 1375-1398 (CKEPQCGMKTNQLLLNNKCIVKGC) is the CysB motif element.

Belongs to the DNA polymerase type-B family.

It is found in the nucleus. The catalysed reaction is DNA(n) + a 2'-deoxyribonucleoside 5'-triphosphate = DNA(n+1) + diphosphate. Functionally, polymerase alpha in a complex with DNA primase is a replicative polymerase. This chain is DNA polymerase alpha catalytic subunit, found in Sterkiella nova (Ciliate).